The sequence spans 562 residues: Transcriptional adapter 2A (562 aa).

A ZZ-type zinc finger spans residues 91 to 146 (KDANRCATCRCSLTEPYIKCSECLDTLLCLQCFSRGKEAFSHRNNHAYIIVRDNIQ). Zn(2+) contacts are provided by C96, C99, C110, C113, C119, C122, H132, and H136. Residues 154–198 (WTARDERILLKTLRTHGYGNWEAVSQALDQRHEPAEVRRHYHDCY) enclose the SANT domain. The region spanning 471–562 (CLTPTEYNFS…GHISRPPSYG (92 aa)) is the SWIRM domain.

As to quaternary structure, component of the Ada2a-containing (ATAC) complex composed of at least Ada2a, Atac1, Hcf, Ada3, Gcn5, Mocs2B, Charac-14, Atac3, Atac2, NC2beta and wds. Component of a complex that does not include Gcn5 or Ada3.

The protein resides in the nucleus. It localises to the chromosome. In terms of biological role, component of the histone acetyltransferase (HAT) complex ATAC; predominantly involved in acetylation of histone H4, including at Lys-6 (H4K5ac) and Lys-13 (H4K12ac). May be part of several different complexes, including Gcn5-independent complexes involved in RNA polymerase II-dependent transcription. This Drosophila melanogaster (Fruit fly) protein is Transcriptional adapter 2A.